A 258-amino-acid chain; its full sequence is Octanoyltransferase (258 aa).

Positions 42-226 constitute a BPL/LPL catalytic domain; the sequence is NVGTDTLLLL…AVVAALDGEL (185 aa). Residues 80 to 87, 156 to 158, and 169 to 171 contribute to the substrate site; these read RGGKITWH, AIG, and GFS. The active-site Acyl-thioester intermediate is C187.

The protein belongs to the LipB family.

The protein localises to the cytoplasm. It carries out the reaction octanoyl-[ACP] + L-lysyl-[protein] = N(6)-octanoyl-L-lysyl-[protein] + holo-[ACP] + H(+). It participates in protein modification; protein lipoylation via endogenous pathway; protein N(6)-(lipoyl)lysine from octanoyl-[acyl-carrier-protein]: step 1/2. Its function is as follows. Catalyzes the transfer of endogenously produced octanoic acid from octanoyl-acyl-carrier-protein onto the lipoyl domains of lipoate-dependent enzymes. Lipoyl-ACP can also act as a substrate although octanoyl-ACP is likely to be the physiological substrate. This is Octanoyltransferase from Rhodococcus jostii (strain RHA1).